Consider the following 338-residue polypeptide: Formamidase (338 aa).

The region spanning 15 to 257 is the CN hydrolase domain; sequence VVIGLAQLAL…DEIVCCELRP (243 aa). Glu61 serves as the catalytic Proton acceptor. Lys130 serves as the catalytic Proton donor. Catalysis depends on Cys163, which acts as the Nucleophile.

This sequence belongs to the carbon-nitrogen hydrolase superfamily. Aliphatic amidase family.

The catalysed reaction is formamide + H2O = formate + NH4(+). Is an aliphatic amidase with a restricted substrate specificity, as it only hydrolyzes formamide. The protein is Formamidase of Pseudomonas syringae pv. tomato (strain ATCC BAA-871 / DC3000).